A 553-amino-acid chain; its full sequence is Glycerol-3-phosphate dehydrogenase (553 aa).

Position 13-41 (13-41 (DLIVIGGGINGVGTARDGALRGLKTLLIE)) interacts with FAD.

Belongs to the FAD-dependent glycerol-3-phosphate dehydrogenase family. It depends on FAD as a cofactor.

It localises to the cytoplasm. It catalyses the reaction a quinone + sn-glycerol 3-phosphate = dihydroxyacetone phosphate + a quinol. The sequence is that of Glycerol-3-phosphate dehydrogenase (glpD) from Synechocystis sp. (strain ATCC 27184 / PCC 6803 / Kazusa).